The sequence spans 65 residues: MPKMKTHRASAKRFKKTANGGLKSASAYTSHRFHGKTKKQRRQLRGTRMMDSTTVKTYAKMLSTL.

Basic residues predominate over residues 1–16 (MPKMKTHRASAKRFKK). The tract at residues 1–24 (MPKMKTHRASAKRFKKTANGGLKS) is disordered.

It belongs to the bacterial ribosomal protein bL35 family.

The polypeptide is Large ribosomal subunit protein bL35 (Leuconostoc mesenteroides subsp. mesenteroides (strain ATCC 8293 / DSM 20343 / BCRC 11652 / CCM 1803 / JCM 6124 / NCDO 523 / NBRC 100496 / NCIMB 8023 / NCTC 12954 / NRRL B-1118 / 37Y)).